The sequence spans 350 residues: Twinfilin-1 (350 aa).

2 consecutive ADF-H domains span residues 4-139 (QTGI…KYLA) and 177-313 (GIAF…EEVH). Residues 316–350 (QHAHKQNFAKPKGPAGKRGIRRLIRGPAEAETAND) are disordered.

It belongs to the actin-binding proteins ADF family. Twinfilin subfamily. Interacts with G-actin; ADP-actin form.

It localises to the cytoplasm. Its subcellular location is the cytoskeleton. In terms of biological role, actin-binding protein involved in motile and morphological processes. Inhibits actin polymerization, likely by sequestering G-actin. This chain is Twinfilin-1 (twf1), found in Xenopus tropicalis (Western clawed frog).